The chain runs to 257 residues: Protein YIPF5 (257 aa).

Topologically, residues 1 to 124 (MSGFDNLNSG…RASDGSIMNE (124 aa)) are cytoplasmic. An interaction with Sec23 region spans residues 75-106 (PPTPQTFYGDSFEEEPPLLEELGINFDHIWQK). The chain crosses the membrane as a helical span at residues 125-145 (TDLAGPVVFCLAFGATLLLAG). Position 146 (K146) is a topological domain, lumenal. The helical transmembrane segment at 147 to 167 (IQFGYVYGISAIGCLGMFCLL) threads the bilayer. Topologically, residues 168–173 (NLMSMT) are cytoplasmic. Residues 174 to 194 (GVSFGCVASVLGYCLLPMILL) traverse the membrane as a helical segment. The Lumenal segment spans residues 195–196 (SS). The chain crosses the membrane as a helical span at residues 197–217 (FAVVFSLQGMVGILLTATIIG). Residues 218–236 (WCSFSASKIFISALAMDGQ) lie on the Cytoplasmic side of the membrane. The helical transmembrane segment at 237 to 257 (QLLVAYPCALLYGVFALISVF) threads the bilayer.

Belongs to the YIP1 family. Interacts with the COPII coat components Sec23 (SEC23A and/or SEC23B) and Sec24 (SEC24A and/or SEC24B). Interacts with YIF1A. May interact with RAB1A. Interacts with YIPF3 and YIPF4.

Its subcellular location is the endoplasmic reticulum membrane. It is found in the golgi apparatus. The protein resides in the cis-Golgi network membrane. It localises to the cytoplasmic vesicle. The protein localises to the COPII-coated vesicle. In terms of biological role, plays a role in transport between endoplasmic reticulum and Golgi. In pancreatic beta cells, required to transport proinsulin from endoplasmic reticulum into the Golgi. The protein is Protein YIPF5 of Rattus norvegicus (Rat).